Consider the following 1404-residue polypeptide: DNA-directed RNA polymerase subunit beta' (1404 aa).

Positions 60, 62, 75, and 78 each coordinate Zn(2+). Positions 449, 451, and 453 each coordinate Mg(2+). Zn(2+)-binding residues include cysteine 778, cysteine 852, cysteine 859, and cysteine 862. A disordered region spans residues 1380 to 1404 (LDRPLEEEEEEEIPQAIAEESDAEE). The span at 1384–1404 (LEEEEEEEIPQAIAEESDAEE) shows a compositional bias: acidic residues.

Belongs to the RNA polymerase beta' chain family. As to quaternary structure, the RNAP catalytic core consists of 2 alpha, 1 beta, 1 beta' and 1 omega subunit. When a sigma factor is associated with the core the holoenzyme is formed, which can initiate transcription. Requires Mg(2+) as cofactor. Zn(2+) serves as cofactor.

It catalyses the reaction RNA(n) + a ribonucleoside 5'-triphosphate = RNA(n+1) + diphosphate. Functionally, DNA-dependent RNA polymerase catalyzes the transcription of DNA into RNA using the four ribonucleoside triphosphates as substrates. The sequence is that of DNA-directed RNA polymerase subunit beta' from Leptospira interrogans serogroup Icterohaemorrhagiae serovar Lai (strain 56601).